Here is a 364-residue protein sequence, read N- to C-terminus: Succinyl-diaminopimelate desuccinylase (364 aa).

His66 is a Zn(2+) binding site. Asp68 is a catalytic residue. Asp97 contacts Zn(2+). Glu127 functions as the Proton acceptor in the catalytic mechanism. Zn(2+) is bound by residues Glu128, Glu156, and His341.

The protein belongs to the peptidase M20A family. DapE subfamily. As to quaternary structure, homodimer. Zn(2+) is required as a cofactor. The cofactor is Co(2+).

The catalysed reaction is N-succinyl-(2S,6S)-2,6-diaminopimelate + H2O = (2S,6S)-2,6-diaminopimelate + succinate. Its pathway is amino-acid biosynthesis; L-lysine biosynthesis via DAP pathway; LL-2,6-diaminopimelate from (S)-tetrahydrodipicolinate (succinylase route): step 3/3. Its function is as follows. Catalyzes the hydrolysis of N-succinyl-L,L-diaminopimelic acid (SDAP), forming succinate and LL-2,6-diaminopimelate (DAP), an intermediate involved in the bacterial biosynthesis of lysine and meso-diaminopimelic acid, an essential component of bacterial cell walls. The chain is Succinyl-diaminopimelate desuccinylase from Wolinella succinogenes (strain ATCC 29543 / DSM 1740 / CCUG 13145 / JCM 31913 / LMG 7466 / NCTC 11488 / FDC 602W) (Vibrio succinogenes).